The following is a 395-amino-acid chain: MAAEATAVAGSGAVGGCLAKDGLQQSKCPDTTPKRRRASSLSRDAERRAYQWCREYLGGAWRRVQPEELRVYPVSGGLSNLLFRCSLPDHLPSVGEEPREVLLRLYGAILQGVDSLVLESVMFAILAERSLGPQLYGVFPEGRLEQYIPSRPLKTQELREPVLSAAIATKMAQFHGMEMPFTKEPHWLFGTMERYLKQIQDLPPTGLPEMNLLEMYSLKDEMGNLRKLLESTPSPVVFCHNDIQEGNILLLSEPENADSLMLVDFEYSSYNYRGFDIGNHFCEWVYDYTHEEWPFYKARPTDYPTQEQQLHFIRHYLAEAKKGETLSQEEQRKLEEDLLVEVSRYALASHFFWGLWSILQASMSTIEFGYLDYAQSRFQFYFQQKGQLTSVHSSS.

A2 carries the N-acetylalanine modification. Residues S75 to L81, R104, Q146 to P152, Q244, and D264 each bind ATP. G77–S79 is a phosphocholine binding site.

This sequence belongs to the choline/ethanolamine kinase family. Homodimer, and heterodimer with CHKA.

It carries out the reaction choline + ATP = phosphocholine + ADP + H(+). The enzyme catalyses ethanolamine + ATP = phosphoethanolamine + ADP + H(+). The protein operates within phospholipid metabolism; phosphatidylethanolamine biosynthesis; phosphatidylethanolamine from ethanolamine: step 1/3. Its function is as follows. Has a key role in phospholipid metabolism, and catalyzes the first step of phosphatidylethanolamine and phosphatidylcholine biosynthesis. The chain is Choline/ethanolamine kinase (CHKB) from Homo sapiens (Human).